We begin with the raw amino-acid sequence, 123 residues long: Large ribosomal subunit protein uL18 (123 aa).

The protein belongs to the universal ribosomal protein uL18 family. In terms of assembly, part of the 50S ribosomal subunit; part of the 5S rRNA/L5/L18/L25 subcomplex. Contacts the 5S and 23S rRNAs.

This is one of the proteins that bind and probably mediate the attachment of the 5S RNA into the large ribosomal subunit, where it forms part of the central protuberance. This Chlamydia trachomatis serovar A (strain ATCC VR-571B / DSM 19440 / HAR-13) protein is Large ribosomal subunit protein uL18.